Consider the following 403-residue polypeptide: Phosphoglycerate kinase (403 aa).

Residues 21 to 23 (DFN), Arg37, 60 to 63 (HLGR), Arg125, and Arg158 contribute to the substrate site. ATP contacts are provided by residues Lys209, Glu332, and 359 to 362 (GGDS).

The protein belongs to the phosphoglycerate kinase family. Monomer.

The protein resides in the cytoplasm. The enzyme catalyses (2R)-3-phosphoglycerate + ATP = (2R)-3-phospho-glyceroyl phosphate + ADP. The protein operates within carbohydrate degradation; glycolysis; pyruvate from D-glyceraldehyde 3-phosphate: step 2/5. The sequence is that of Phosphoglycerate kinase from Koribacter versatilis (strain Ellin345).